A 154-amino-acid polypeptide reads, in one-letter code: Crossover junction endodeoxyribonuclease RuvC (154 aa).

Active-site residues include D7, E67, and D139. Residues D7, E67, and D139 each coordinate Mg(2+).

Belongs to the RuvC family. As to quaternary structure, homodimer which binds Holliday junction (HJ) DNA. The HJ becomes 2-fold symmetrical on binding to RuvC with unstacked arms; it has a different conformation from HJ DNA in complex with RuvA. In the full resolvosome a probable DNA-RuvA(4)-RuvB(12)-RuvC(2) complex forms which resolves the HJ. Requires Mg(2+) as cofactor.

It localises to the cytoplasm. The catalysed reaction is Endonucleolytic cleavage at a junction such as a reciprocal single-stranded crossover between two homologous DNA duplexes (Holliday junction).. The RuvA-RuvB-RuvC complex processes Holliday junction (HJ) DNA during genetic recombination and DNA repair. Endonuclease that resolves HJ intermediates. Cleaves cruciform DNA by making single-stranded nicks across the HJ at symmetrical positions within the homologous arms, yielding a 5'-phosphate and a 3'-hydroxyl group; requires a central core of homology in the junction. The consensus cleavage sequence is 5'-(A/T)TT(C/G)-3'. Cleavage occurs on the 3'-side of the TT dinucleotide at the point of strand exchange. HJ branch migration catalyzed by RuvA-RuvB allows RuvC to scan DNA until it finds its consensus sequence, where it cleaves and resolves the cruciform DNA. The polypeptide is Crossover junction endodeoxyribonuclease RuvC (Synechococcus sp. (strain CC9605)).